Here is a 250-residue protein sequence, read N- to C-terminus: 7-cyano-7-deazaguanine synthase (250 aa).

28 to 38 (LSGGLDSATCV) provides a ligand contact to ATP. Cys213, Cys226, Cys229, and Cys232 together coordinate Zn(2+).

The protein belongs to the QueC family. Requires Zn(2+) as cofactor.

It carries out the reaction 7-carboxy-7-deazaguanine + NH4(+) + ATP = 7-cyano-7-deazaguanine + ADP + phosphate + H2O + H(+). It participates in purine metabolism; 7-cyano-7-deazaguanine biosynthesis. Catalyzes the ATP-dependent conversion of 7-carboxy-7-deazaguanine (CDG) to 7-cyano-7-deazaguanine (preQ(0)). This is 7-cyano-7-deazaguanine synthase from Rhodopirellula baltica (strain DSM 10527 / NCIMB 13988 / SH1).